Consider the following 150-residue polypeptide: 3-dehydroquinate dehydratase (150 aa).

The active-site Proton acceptor is the Y26. Substrate-binding residues include N77, H83, and D90. Residue H103 is the Proton donor of the active site. Residues 104-105 (LS) and R114 contribute to the substrate site.

Belongs to the type-II 3-dehydroquinase family. As to quaternary structure, homododecamer.

It catalyses the reaction 3-dehydroquinate = 3-dehydroshikimate + H2O. It participates in metabolic intermediate biosynthesis; chorismate biosynthesis; chorismate from D-erythrose 4-phosphate and phosphoenolpyruvate: step 3/7. In terms of biological role, catalyzes a trans-dehydration via an enolate intermediate. The sequence is that of 3-dehydroquinate dehydratase from Pectobacterium carotovorum subsp. carotovorum (strain PC1).